We begin with the raw amino-acid sequence, 793 residues long: Kinesin-associated protein 3 (793 aa).

A Phosphoserine modification is found at S60. A compositionally biased stretch (basic and acidic residues) spans 103–119 (LPGKEKKEKSSKPKDPP). The tract at residues 103–123 (LPGKEKKEKSSKPKDPPPFEG) is disordered. ARM repeat units follow at residues 333–373 (FMEN…NLSF), 374–412 (DTGL…HISM), 494–533 (DGPT…NLTI), 578–620 (DDSC…QMVF), and 621–662 (HQAT…IIAE).

In terms of assembly, interacts with SMC3 subunit of the cohesin complex. Heterotrimer of KIFAP3, KIF3A and KIF3B. Interacts with RAP1GDS1/SMG GDS. In terms of processing, phosphorylated on tyrosine residues by SRC in vitro; this reduces the binding affinity of the protein for RAP1GDS1.

In terms of biological role, involved in tethering the chromosomes to the spindle pole and in chromosome movement. Binds to the tail domain of the KIF3A/KIF3B heterodimer to form a heterotrimeric KIF3 complex and may regulate the membrane binding of this complex. The sequence is that of Kinesin-associated protein 3 (Kifap3) from Mus musculus (Mouse).